We begin with the raw amino-acid sequence, 114 residues long: MCFTVNGEMQLTPDTAAFLAMLFDFPFAFTKDLQPGGINHQMRDFTPGERFETDINRLCPPADTAVIRAAQRNIHQCKNGINKALRSAQGQPEYAFNDQHSRDGKVRIALRSAS.

May be associated with transposition functions of transposon Tn903. This is an uncharacterized protein from Escherichia coli.